The following is a 277-amino-acid chain: Shikimate dehydrogenase (NADP(+)) (277 aa).

Residues 14-16 (SKS) and threonine 61 each bind shikimate. Residue lysine 65 is the Proton acceptor of the active site. Aspartate 77 provides a ligand contact to NADP(+). 2 residues coordinate shikimate: asparagine 86 and aspartate 102. NADP(+) is bound by residues 127–131 (GAGGA), 151–156 (NRTPDK), and methionine 215. Tyrosine 217 is a binding site for shikimate. An NADP(+)-binding site is contributed by glycine 239.

It belongs to the shikimate dehydrogenase family. Homodimer.

It carries out the reaction shikimate + NADP(+) = 3-dehydroshikimate + NADPH + H(+). It participates in metabolic intermediate biosynthesis; chorismate biosynthesis; chorismate from D-erythrose 4-phosphate and phosphoenolpyruvate: step 4/7. In terms of biological role, involved in the biosynthesis of the chorismate, which leads to the biosynthesis of aromatic amino acids. Catalyzes the reversible NADPH linked reduction of 3-dehydroshikimate (DHSA) to yield shikimate (SA). The chain is Shikimate dehydrogenase (NADP(+)) from Nitrosomonas eutropha (strain DSM 101675 / C91 / Nm57).